The primary structure comprises 845 residues: Translation initiation factor IF-2 (845 aa).

2 disordered regions span residues 45-91 (RRKI…SNLS) and 127-209 (EESL…TPKV). A compositionally biased stretch (polar residues) spans 81-91 (SESSMAKSNLS). Basic and acidic residues predominate over residues 137–149 (TEIHQEEQKEEKN). Polar residues predominate over residues 151–162 (PVQTSPLSSAHS). Basic and acidic residues predominate over residues 179 to 193 (TEKRKADEIKNDDRH). Residues 343-512 (PRPPVVTIMG…LLQAELLDLK (170 aa)) form the tr-type G domain. Residues 352–359 (GHVDHGKT) form a G1 region. 352 to 359 (GHVDHGKT) contributes to the GTP binding site. Residues 377–381 (GITQH) are G2. Residues 398-401 (DTPG) form a G3 region. Residues 398 to 402 (DTPGH) and 452 to 455 (NKID) contribute to the GTP site. The tract at residues 452-455 (NKID) is G4. Positions 488 to 490 (SAK) are G5.

This sequence belongs to the TRAFAC class translation factor GTPase superfamily. Classic translation factor GTPase family. IF-2 subfamily.

The protein localises to the cytoplasm. Functionally, one of the essential components for the initiation of protein synthesis. Protects formylmethionyl-tRNA from spontaneous hydrolysis and promotes its binding to the 30S ribosomal subunits. Also involved in the hydrolysis of GTP during the formation of the 70S ribosomal complex. In Bartonella quintana (strain Toulouse) (Rochalimaea quintana), this protein is Translation initiation factor IF-2.